The primary structure comprises 174 residues: RNA pyrophosphohydrolase (174 aa).

Positions 6 to 149 (GYRPNVGIIL…KRDVYLGALK (144 aa)) constitute a Nudix hydrolase domain. Residues 38 to 59 (GGIKPGESPETAMYRELYEEVG) carry the Nudix box motif.

Belongs to the Nudix hydrolase family. RppH subfamily. A divalent metal cation serves as cofactor.

Accelerates the degradation of transcripts by removing pyrophosphate from the 5'-end of triphosphorylated RNA, leading to a more labile monophosphorylated state that can stimulate subsequent ribonuclease cleavage. The protein is RNA pyrophosphohydrolase of Neisseria meningitidis serogroup A / serotype 4A (strain DSM 15465 / Z2491).